The chain runs to 1860 residues: Collagen alpha-1(XXVII) chain (1860 aa).

Positions 1–41 (MGAGSARGARGTAAAAAARGGGFLFSWILVSFACHLASTQG) are cleaved as a signal peptide. Positions 42–624 (APEDVDILQR…AGSTPFPLLM (583 aa)) are cleaved as a propeptide — N-terminal propeptide. Residues 71 to 236 (QSGFIFTQRA…NYCTHLRKQC (166 aa)) form the Laminin G-like domain. N271 carries an N-linked (GlcNAc...) asparagine glycan. Disordered stretches follow at residues 278–608 (ALGS…TSSG), 625–772 (GPPG…GSDG), and 851–1625 (LKGD…IQLQ). Composition is skewed to polar residues over residues 298–309 (TKPQRTSPTNPH) and 386–409 (HPTQ…QVPP). Pro residues predominate over residues 432–445 (MPRPPPPSTRPLPP). 2 stretches are compositionally biased toward low complexity: residues 446 to 457 (TTSSSKKPIPTL) and 485 to 505 (TALS…RPPA). Positions 509-518 (PPTSGTSTPR) are enriched in polar residues. Composition is skewed to low complexity over residues 572 to 588 (TTRP…QTTP) and 599 to 608 (SSSPRPTSSG). 16 consecutive Collagen-like domains span residues 625–679 (GPPG…GDPG), 688–747 (GAKG…PGPV), 748–807 (GDPG…DGNP), 808–867 (GELG…SGDP), 871–930 (GDKG…KGKP), 931–990 (GARG…PGPV), 1003–1062 (GEPG…RGAK), 1066–1125 (GPRG…PGTK), 1126–1185 (GLPG…IGQR), 1192–1251 (GDSG…QGEK), 1258–1317 (GAKG…KGIV), 1318–1378 (GPLG…RGKP), 1382–1441 (GQPG…EGIA), 1442–1501 (GPDG…PGQL), 1502–1561 (GPPG…QGPR), and 1562–1621 (GPPG…PGGP). A triple-helical region region spans residues 625–1618 (GPPGPKGDCG…RGRPGPPGPP (994 aa)). A compositionally biased stretch (pro residues) spans 654–669 (RGPPGPYGNPGLPGPP). A compositionally biased stretch (low complexity) spans 714 to 734 (PGPAGHPGEQGQPGPEGSPGA). 2 stretches are compositionally biased toward low complexity: residues 911 to 924 (FPGD…NGPE) and 932 to 944 (ARGL…QLGP). Positions 1033-1042 (GMPGGMGTPG) are enriched in gly residues. Residues 1043-1053 (EPGPQGPPGSR) show a composition bias toward pro residues. Residues 1130–1142 (EPGPQGPQGPIGP) show a composition bias toward pro residues. Composition is skewed to basic and acidic residues over residues 1202-1220 (LKGD…EKGQ) and 1241-1253 (PEGK…EKGR). Composition is skewed to basic and acidic residues over residues 1326–1338 (KGEK…DGKA) and 1350–1360 (PVGDRGDRGEP). Residues 1449-1458 (RDGQAGQQGE) show a composition bias toward low complexity. Over residues 1572-1587 (IVGPLGILGPSGLPGP) the composition is skewed to low complexity. Over residues 1603 to 1620 (RGPPGPRGRPGPPGPPGG) the composition is skewed to pro residues. Positions 1622–1860 (IQLQQDDLGA…RLEVGPACFL (239 aa)) are cleaved as a propeptide — C-terminal propeptide. Residues 1660–1860 (GEIFKTLHYL…RLEVGPACFL (201 aa)) form the Fibrillar collagen NC1 domain. Disulfide bonds link C1690/C1722, C1731/C1858, and C1767/C1811. The Ca(2+) site is built by D1708, N1710, C1713, and D1716. N1769 carries N-linked (GlcNAc...) asparagine glycosylation.

It belongs to the fibrillar collagen family.

It localises to the secreted. It is found in the extracellular space. The protein resides in the extracellular matrix. Its function is as follows. Plays a role during the calcification of cartilage and the transition of cartilage to bone. This is Collagen alpha-1(XXVII) chain (COL27A1) from Homo sapiens (Human).